Here is a 207-residue protein sequence, read N- to C-terminus: Vascular endothelial growth factor B (207 aa).

A signal peptide spans 1–21 (MSPLLRRLLLAVLLQLAPAQA). 3 disulfides stabilise this stretch: cysteine 47–cysteine 89, cysteine 78–cysteine 122, and cysteine 82–cysteine 124. Positions 124–139 (CRPKKRESAVKPDRAS) are enriched in basic and acidic residues. The tract at residues 124 to 207 (CRPKKRESAV…AASSVVKGGA (84 aa)) is disordered. Residues 174–201 (PSAHAAPSAASALTPGPATAAADAAASS) are compositionally biased toward low complexity.

Belongs to the PDGF/VEGF growth factor family. Homodimer; disulfide-linked. Can also form heterodimer with VEGF. VEGF-B186 is O-glycosylated.

Its subcellular location is the secreted. In terms of biological role, growth factor for endothelial cells. VEGF-B167 binds heparin and neuropilin-1 whereas the binding to neuropilin-1 of VEGF-B186 is regulated by proteolysis. This Bos taurus (Bovine) protein is Vascular endothelial growth factor B (VEGFB).